A 396-amino-acid chain; its full sequence is Elongation factor Tu (396 aa).

One can recognise a tr-type G domain in the interval 10 to 205 (KPHVNIGTIG…ACDDNIPDPV (196 aa)). A G1 region spans residues 19-26 (GHVDHGKT). Residue 19–26 (GHVDHGKT) participates in GTP binding. A Mg(2+)-binding site is contributed by Thr26. Residues 62-66 (GITIN) are G2. A G3 region spans residues 83 to 86 (DAPG). GTP is bound by residues 83–87 (DAPGH) and 138–141 (NKCD). Residues 138-141 (NKCD) are G4. Residues 175–177 (SAL) are G5.

It belongs to the TRAFAC class translation factor GTPase superfamily. Classic translation factor GTPase family. EF-Tu/EF-1A subfamily. In terms of assembly, monomer.

The protein resides in the cytoplasm. The catalysed reaction is GTP + H2O = GDP + phosphate + H(+). Its function is as follows. GTP hydrolase that promotes the GTP-dependent binding of aminoacyl-tRNA to the A-site of ribosomes during protein biosynthesis. The chain is Elongation factor Tu from Corynebacterium glutamicum (strain ATCC 13032 / DSM 20300 / JCM 1318 / BCRC 11384 / CCUG 27702 / LMG 3730 / NBRC 12168 / NCIMB 10025 / NRRL B-2784 / 534).